A 112-amino-acid chain; its full sequence is Nucleoid-associated protein CV_1611 (112 aa).

This sequence belongs to the YbaB/EbfC family. As to quaternary structure, homodimer.

It localises to the cytoplasm. Its subcellular location is the nucleoid. Functionally, binds to DNA and alters its conformation. May be involved in regulation of gene expression, nucleoid organization and DNA protection. This is Nucleoid-associated protein CV_1611 from Chromobacterium violaceum (strain ATCC 12472 / DSM 30191 / JCM 1249 / CCUG 213 / NBRC 12614 / NCIMB 9131 / NCTC 9757 / MK).